Reading from the N-terminus, the 479-residue chain is Splicing factor ESS-2 homolog (479 aa).

At M1 the chain carries N-acetylmethionine. Disordered stretches follow at residues 1 to 38 (MGTP…RSRQ) and 95 to 152 (GKIS…PSLD). T3 is modified (phosphothreonine). Positions 7-19 (SAGALFLSSASAP) are enriched in low complexity. Residues 135-145 (DDGEAGEEEEK) show a composition bias toward acidic residues. A Glycyl lysine isopeptide (Lys-Gly) (interchain with G-Cter in SUMO2) cross-link involves residue K145. Position 295 is a phosphoserine (S295). At T389 the chain carries Phosphothreonine. A phosphoserine mark is found at S394 and S398. The segment at 415-479 (RALRASYTPS…PARRKASDFF (65 aa)) is disordered. The span at 433–454 (TPAGGPQTPTSTPAPGSATRTP) shows a compositional bias: low complexity. A compositionally biased stretch (polar residues) spans 455–466 (LTQDPASITDNL).

Belongs to the ESS2 family. Identified in the spliceosome C complex. Interacts with FRA10AC1. In terms of tissue distribution, in the adult, widely expressed with highest expression in the testis and brain. Also widely expressed in the embryo with highest levels in the anterior pons.

It is found in the nucleus. Its function is as follows. May be involved in pre-mRNA splicing. The sequence is that of Splicing factor ESS-2 homolog (Ess2) from Mus musculus (Mouse).